The chain runs to 672 residues: Segment polarity protein dishevelled homolog mig-5 (672 aa).

Positions 9-91 (CSQIKVFYYL…GFYEIFLVST (83 aa)) constitute a DIX domain. 3 disordered regions span residues 97–127 (LPRN…ATPY), 150–174 (YTSN…SSLY), and 187–215 (DDDR…ATES). A compositionally biased stretch (polar residues) spans 98-108 (PRNSGTMTRPQ). The segment covering 160–169 (YDEHTRRTGD) has biased composition (basic and acidic residues). Over residues 191–202 (RRKKQKKERFRR) the composition is skewed to basic residues. The region spanning 226-294 (EIYLPMKNVP…PQAVRSLREA (69 aa)) is the PDZ domain. A DEP domain is found at 427–501 (PDSGLAVKNR…TEKCYYVFGD (75 aa)). A disordered region spans residues 604–672 (KNNHRQVPAP…SNSRTRILRT (69 aa)). Polar residues predominate over residues 660–672 (ENSSNSRTRILRT).

It belongs to the DSH family.

The protein localises to the cytoplasm. Its subcellular location is the cell cortex. It is found in the cell membrane. It localises to the cell junction. Plays a role in the signal transduction pathways mediated by multiple Wnt genes. Functions redundantly with other dishevelled family members throughout development. During embryonic and larval development, controls cell migration and/or cell fate specification of hypodermal cells, hypodermal seam cells, vulval precursor cells and, through distal tip cell migration, somatic gonad precursor cells. In early embryos, regulates the orientation of the mitotic spindle of blastomeres and specifically, along with dsh-2, is required for the correct mitotic spindle orientation of the ABar blastomere division plane. Controls the polarity and the asymmetric localization of downstream components of the wnt/beta-catenin asymmetry pathway, and in particular, controls the asymmetric localization of the wnt receptor lin-17/Frizzled in ectodermal blast B cells. May act redundantly with dsh-2 to regulate the expression and nuclear localization of the beta-catenin homolog wrm-2, but alone seems to be required for the polarity of wrm-2 during the asymmetric cell division of hypodermal seam cells. Also, maintains the polarity and migration of QL neuroblasts in larvae. During the embryonic development of touch receptor neurons, may act redundantly with dsh-1, downstream of wnt signaling ligands and the wnt receptor lin-17/Frizzled, to direct the growth of neurites of touch receptor neurons towards the anterior of the body of the worm and towards the PLM touch receptor neuron and other tail neurons. May play a role in the guidance of posterior D-type motor neuron axons along the anteroposterior axis. This Caenorhabditis elegans protein is Segment polarity protein dishevelled homolog mig-5.